Consider the following 137-residue polypeptide: Small ribosomal subunit protein bS6 (137 aa).

Residues 99–137 (LSPMKAAESREDRRSGGDDRPRRSADSEERQSASQDEEE) are disordered. Residues 105 to 129 (AESREDRRSGGDDRPRRSADSEERQ) are compositionally biased toward basic and acidic residues.

This sequence belongs to the bacterial ribosomal protein bS6 family.

Binds together with bS18 to 16S ribosomal RNA. The chain is Small ribosomal subunit protein bS6 from Marinobacter nauticus (strain ATCC 700491 / DSM 11845 / VT8) (Marinobacter aquaeolei).